Consider the following 530-residue polypeptide: TNF receptor-associated factor family protein DDB_G0272829 (530 aa).

The segment at 35–81 adopts an RING-type; degenerate zinc-finger fold; that stretch reads CQICEGLLISSLIPNRMKALQCINGHCFCLTCWESILEIKSECPTCR. TRAF-type zinc fingers lie at residues 134 to 188 and 189 to 246; these read RHES…KQMQ and GHIL…NDND. Disordered stretches follow at residues 242 to 267, 391 to 432, and 483 to 530; these read NNDN…LSSS, TTTT…DNQG, and FNQL…GTSL. 3 stretches are compositionally biased toward low complexity: residues 253-267, 391-415, and 485-502; these read NNSN…LSSS, TTTT…NNNN, and QLSQ…SQSL. Residues 361–422 are a coiled coil; sequence ILEHQQQQNQ…NNNNEDEEDD (62 aa). The segment covering 509–530 has biased composition (polar residues); that stretch reads ITINQNQNTPSNPFSIFSGTSL.

This sequence belongs to the TNF receptor-associated factor family.

Its subcellular location is the cytoplasm. Probable adapter protein and signal transducer that links members of the tumor necrosis factor receptor family to different signaling pathways by association with the receptor cytoplasmic domain and kinases. This chain is TNF receptor-associated factor family protein DDB_G0272829, found in Dictyostelium discoideum (Social amoeba).